We begin with the raw amino-acid sequence, 2372 residues long: Nonribosomal peptide synthase roqA (2372 aa).

The adenylation 1 stretch occupies residues 217–610 (EHCRSQPDAE…VGRKDREVKI (394 aa)). Residues 723-745 (AASSHSSTREQPSNQRDKEDVEL) form a disordered region. The segment covering 725–736 (SSHSSTREQPSN) has biased composition (polar residues). One can recognise a Carrier 1 domain in the interval 750–823 (SAKENTLCSV…KIARCTAESK (74 aa)). Position 784 is an O-(pantetheine 4'-phosphoryl)serine (serine 784). Residues 856–1122 (EDIYPCTPLQ…FATFPFRTQL (267 aa)) form a condensation 1 region. The tract at residues 1290 to 1679 (QPNSEAVCAW…VGRKDTQVKL (390 aa)) is adenylation 2. The 77-residue stretch at 1819-1895 (KPTTEQERFV…LFCKHVILIQ (77 aa)) folds into the Carrier 2 domain. An O-(pantetheine 4'-phosphoryl)serine modification is found at serine 1856. Residues 1962–2227 (TSNYTSTAIF…FNVLPCRIAI (266 aa)) are condensation 2.

It participates in alkaloid biosynthesis. Functionally, dipeptide synthase; part of the gene cluster that mediates the biosynthesis of the mycotoxins roquefortine C and meleagrin. The first stage is catalyzed by the dipeptide synthase roqA which condenses histidine and tryptophan to produce histidyltryptophanyldiketopiperazine (HTD). HTD is then converted to roquefortine C through two possible pathways. In the first pathway, prenyltransferase roqD transforms HTD to the intermediate roquefortine D, which is in turn converted to roquefortine C by the cytochrome P450 monooxygenase roqR. In the second pathway, HTD is first converted to the intermediate dehydrohistidyltryptophanyldi-ketopiperazine (DHTD) by roqR which is then prenylated by roqD to form roquefortine C. Roquefortine C can be further transformed to meleagrin via three more reactions including oxydation to glandicolin A by roqM, which is further reduced to glandicoline B by roqO. Finally, glandicoline B is converted to meleagrin by the glandicoline B O-methyltransferase roqN. More studies identified further branching and additional metabolites produced by the roquefortine/meleagrin cluster, including roquefortine F, roquefortine L, roquefortine M, roquefortine N and neoxaline. In Penicillium rubens (strain ATCC 28089 / DSM 1075 / NRRL 1951 / Wisconsin 54-1255) (Penicillium chrysogenum), this protein is Nonribosomal peptide synthase roqA.